A 52-amino-acid polypeptide reads, in one-letter code: ATP synthase protein 8 (52 aa).

A helical transmembrane segment spans residues 6 to 26 (PLLWLNLFLMFSATFVMFIVL).

It belongs to the ATPase protein 8 family. In terms of assembly, F-type ATPases have 2 components, CF(1) - the catalytic core - and CF(0) - the membrane proton channel.

The protein resides in the mitochondrion membrane. In terms of biological role, mitochondrial membrane ATP synthase (F(1)F(0) ATP synthase or Complex V) produces ATP from ADP in the presence of a proton gradient across the membrane which is generated by electron transport complexes of the respiratory chain. F-type ATPases consist of two structural domains, F(1) - containing the extramembraneous catalytic core and F(0) - containing the membrane proton channel, linked together by a central stalk and a peripheral stalk. During catalysis, ATP synthesis in the catalytic domain of F(1) is coupled via a rotary mechanism of the central stalk subunits to proton translocation. Part of the complex F(0) domain. Minor subunit located with subunit a in the membrane. This Penaeus monodon (Giant tiger prawn) protein is ATP synthase protein 8 (MT-ATP8).